We begin with the raw amino-acid sequence, 216 residues long: MTIKKMEAIVKGLINAGYLKNKMVSKALLTVPRHEFIPAELHDYAYVDTPLNIGHGQTISAIHMVAIICDALDLKEGDKVLEIGTGSGYHAAVVAEIVGKNGQVITIERIPELAEKAESTLKKLGYTNVKVICGNGTLGSSEFAPYDKIYLTASGPDIPNSLIEQLKKGGKLVAPVGLYIQDLILLEKKNGNIIKKNLGAVAFVPLIGKNGWHNEY.

S60 is an active-site residue.

The protein belongs to the methyltransferase superfamily. L-isoaspartyl/D-aspartyl protein methyltransferase family.

It localises to the cytoplasm. The enzyme catalyses [protein]-L-isoaspartate + S-adenosyl-L-methionine = [protein]-L-isoaspartate alpha-methyl ester + S-adenosyl-L-homocysteine. Its function is as follows. Catalyzes the methyl esterification of L-isoaspartyl residues in peptides and proteins that result from spontaneous decomposition of normal L-aspartyl and L-asparaginyl residues. It plays a role in the repair and/or degradation of damaged proteins. This Methanococcus aeolicus (strain ATCC BAA-1280 / DSM 17508 / OCM 812 / Nankai-3) protein is Protein-L-isoaspartate O-methyltransferase.